Consider the following 927-residue polypeptide: DNA mismatch repair protein MutS (927 aa).

An ATP-binding site is contributed by 646 to 653; the sequence is GPNMAGKS. Residues 904–927 form a disordered region; sequence SAQPGSAEQGESPDKHDEGKNSRG. A compositionally biased stretch (basic and acidic residues) spans 915–927; that stretch reads SPDKHDEGKNSRG.

This sequence belongs to the DNA mismatch repair MutS family.

Its function is as follows. This protein is involved in the repair of mismatches in DNA. It is possible that it carries out the mismatch recognition step. This protein has a weak ATPase activity. In Desulfovibrio desulfuricans (strain ATCC 27774 / DSM 6949 / MB), this protein is DNA mismatch repair protein MutS.